The chain runs to 79 residues: U-actitoxin-Oulsp1 (79 aa).

The first 21 residues, 1–21 (MNTKLVVVFLLSAILFVSVTA), serve as a signal peptide directing secretion. The propeptide occupies 22 to 43 (SRPGKDLERDEAYETYDDENKR). In terms of domain architecture, ShKT spans 45 to 79 (CKDVFPAATCRHAKSVGNCSSEKYKRNCAITCGAC). 3 cysteine pairs are disulfide-bonded: cysteine 45/cysteine 79, cysteine 54/cysteine 72, and cysteine 63/cysteine 76. Positions 67-68 (KY) are crucial for binding to potassium channels.

This sequence belongs to the sea anemone type 1 potassium channel toxin family. Type 1b subfamily. Two similar peptides (OspTx2a-p1 and -p2) are obtained after synthesis and oxidative folding. They may differ by a D-Cys at position 76 (corresponding to OspTx2a-p2). Since C-terminal Cys residues are prone to racemization during solid-phase peptide synthesis, and if the presence of a D-amino acid is correct, it is probable that OspTx2a-p1 (L-Cys-76 form) corresponds to the native peptide.

It is found in the secreted. Functionally, toxin that weakly blocks the two voltage-gated potassium channels on Kv1.2/KCNA2 (IC(50)=1.8-2.5 uM) and Kv1.6/KCNA6 (IC(50)=5.6-6.2 uM). The sequence is that of U-actitoxin-Oulsp1 from Oulactis sp. (Sea anemone).